The following is a 226-amino-acid chain: UPF0173 metal-dependent hydrolase Dgeo_0136 (226 aa).

Belongs to the UPF0173 family.

The sequence is that of UPF0173 metal-dependent hydrolase Dgeo_0136 from Deinococcus geothermalis (strain DSM 11300 / CIP 105573 / AG-3a).